The sequence spans 2108 residues: Kinesin-like protein KIF26B (2108 aa).

Disordered stretches follow at residues 1 to 124 and 263 to 287; these read MNSV…PGSD and KHGS…PTHQ. Over residues 40–50 the composition is skewed to basic and acidic residues; it reads WYRKAYEESRA. A compositionally biased stretch (low complexity) spans 58 to 98; the sequence is GAGSALGSSGTPSPGSGTSSPSSFTGSPGPASPGIGTSSPG. Residues 99-120 are compositionally biased toward gly residues; that stretch reads SLGGSPGFGTGSPGSGSGGGSS. Residues 450 to 801 form the Kinesin motor domain; the sequence is KVKVMLRICS…IQIASRVLRM (352 aa). ATP is bound at residue 546–553; the sequence is GHAKLGKS. Disordered stretches follow at residues 805–825, 876–917, 937–1166, 1406–1504, 1519–1653, 1685–1799, and 1824–1974; these read KTKY…GRMR, SDKE…GKSE, DGSE…ESKK, EPEA…PVTD, GLAT…SSSK, AESL…ASKL, and RAGP…WVDG. Low complexity predominate over residues 1004–1046; the sequence is SHSPVPAAAPAHSPSPASPRSVPGSSSQHSASPLVQSPSLQSS. The segment covering 1424–1461 has biased composition (basic and acidic residues); sequence RESKENSAKKEMKFEDPWLKREEEVKKETAHPNEEGMM. Low complexity predominate over residues 1491–1500; the sequence is SSSSGEVSAS. Composition is skewed to polar residues over residues 1521 to 1537 and 1611 to 1628; these read ATQS…SSSL and RASP…SPLN. 2 stretches are compositionally biased toward low complexity: residues 1713–1730 and 1751–1763; these read SAGT…AGQS and STTK…TKSL. The span at 1781–1795 shows a compositional bias: polar residues; the sequence is PWSTQSLSRNRSSGL. Residues 1824–1836 are compositionally biased toward low complexity; sequence RAGPEAEARGGAL. Threonine 1855 carries the phosphothreonine modification. 2 stretches are compositionally biased toward polar residues: residues 1866–1875 and 1907–1925; these read GHGSDNSSVL and ATGS…SSSV. The span at 1930–1948 shows a compositional bias: basic residues; that stretch reads RSLKTPKKRSNPGSQRRRL. Residues 1954–1968 are compositionally biased toward polar residues; the sequence is LDTSSPVRKPPNSTG. Serine 1958 is modified (phosphoserine).

It belongs to the TRAFAC class myosin-kinesin ATPase superfamily. Kinesin family. KIF26 subfamily. In terms of assembly, interacts with MYH10. Post-translationally, phosphorylation at Thr-1855 and Ser-1958 by CDKs, mainly CDK2 and CDK5, enhances the interaction with NEDD4, polyubiquitination, and subsequent proteasomal degradation. Phosphorylation occurs upon loss of interaction with microtubules. In terms of processing, polyubiquitinated by NEDD4, resulting in proteasomal degradation.

It localises to the cytoplasm. It is found in the cytoskeleton. Essential for embryonic kidney development. Plays an important role in the compact adhesion between mesenchymal cells adjacent to the ureteric buds, possibly by interacting with MYH10. This could lead to the establishment of the basolateral integrity of the mesenchyme and the polarized expression of ITGA8, which maintains the GDNF expression required for further ureteric bud attraction. Although it seems to lack ATPase activity it is constitutively associated with microtubules. In Homo sapiens (Human), this protein is Kinesin-like protein KIF26B (KIF26B).